Here is a 568-residue protein sequence, read N- to C-terminus: Adenine deaminase (568 aa).

The protein belongs to the metallo-dependent hydrolases superfamily. Adenine deaminase family. Mn(2+) serves as cofactor.

The enzyme catalyses adenine + H2O + H(+) = hypoxanthine + NH4(+). The chain is Adenine deaminase from Clostridium perfringens (strain ATCC 13124 / DSM 756 / JCM 1290 / NCIMB 6125 / NCTC 8237 / Type A).